A 255-amino-acid chain; its full sequence is MILVFDVGNTNTVIGVYDREKLLNHWRIRTNPQRTCDEYGILLRSLLENDKLNLKDIKSVVISSVVPTLMMELEWMSRKFFACRPLVIGPGVKSGLAIKYENPREVGADRVVNAVAAYDKYGGPLIIVDFGTATTFCVVSAKGEYLGGAIAPGIIISTEALVSKAAKLPRVELQRPRSLIGKNTVSSMQAGIMYGFVGQVEGIITRMKTEIETTPQVIATGGLAAVIARETDVIDKVDEFLTLDGLRLIYEMNRG.

6-13 contacts ATP; it reads DVGNTNTV. Residues Tyr100 and 107–110 each bind substrate; that span reads GADR. Asp109 acts as the Proton acceptor in catalysis. A K(+)-binding site is contributed by Asp129. Residue Thr132 coordinates ATP. Thr184 lines the substrate pocket.

The protein belongs to the type III pantothenate kinase family. In terms of assembly, homodimer. NH4(+) is required as a cofactor. Requires K(+) as cofactor.

It is found in the cytoplasm. The enzyme catalyses (R)-pantothenate + ATP = (R)-4'-phosphopantothenate + ADP + H(+). Its pathway is cofactor biosynthesis; coenzyme A biosynthesis; CoA from (R)-pantothenate: step 1/5. Functionally, catalyzes the phosphorylation of pantothenate (Pan), the first step in CoA biosynthesis. This chain is Type III pantothenate kinase, found in Syntrophomonas wolfei subsp. wolfei (strain DSM 2245B / Goettingen).